We begin with the raw amino-acid sequence, 543 residues long: NADH-ubiquinone oxidoreductase chain 4 (543 aa).

A run of 14 helical transmembrane segments spans residues 5–25, 84–104, 129–149, 161–181, 182–202, 213–233, 254–274, 287–307, 321–341, 350–370, 377–397, 416–436, 456–476, and 501–521; these read FLMF…IIWS, VVAF…YILF, VDGI…IALM, SYLI…LVLD, ILLF…LIGL, FYIF…ILTM, IQIF…PTIF, PLGG…YGIF, YTYI…FSTL, IAYS…SNTI, ILLG…VGGV, MAPL…GVPL, LLGL…IFLF, and FYAL…PSII.

Belongs to the complex I subunit 4 family.

It is found in the mitochondrion membrane. The enzyme catalyses a ubiquinone + NADH + 5 H(+)(in) = a ubiquinol + NAD(+) + 4 H(+)(out). Core subunit of the mitochondrial membrane respiratory chain NADH dehydrogenase (Complex I) that is believed to belong to the minimal assembly required for catalysis. Complex I functions in the transfer of electrons from NADH to the respiratory chain. The immediate electron acceptor for the enzyme is believed to be ubiquinone. The chain is NADH-ubiquinone oxidoreductase chain 4 (ndh-4) from Neurospora crassa (strain ATCC 24698 / 74-OR23-1A / CBS 708.71 / DSM 1257 / FGSC 987).